We begin with the raw amino-acid sequence, 233 residues long: Phycoerythrobilin synthase (233 aa).

Belongs to the HY2 family.

The catalysed reaction is (3Z)-phycoerythrobilin + 2 oxidized 2[4Fe-4S]-[ferredoxin] = biliverdin IXalpha + 2 reduced 2[4Fe-4S]-[ferredoxin] + 4 H(+). Functionally, plays a role in phycoerythrobilin biosynthesis, the red pigment chromophore photosynthetically active biliproteins of the host cyanobacteria. Uses a four-electron reduction to carry out the reactions catalyzed by two enzymes (EC 1.3.7.2 and EC 1.3.7.3) in host. This Prochlorococcus protein is Phycoerythrobilin synthase (pebS).